The following is a 342-amino-acid chain: 6-hydroxytryprostatin B O-methyltransferase (342 aa).

Residue Asp201 coordinates S-adenosyl-L-methionine. Catalysis depends on His244, which acts as the Proton acceptor.

Belongs to the class I-like SAM-binding methyltransferase superfamily. Cation-independent O-methyltransferase family. As to quaternary structure, homodimer.

The catalysed reaction is 6-hydroxytryprostatin B + S-adenosyl-L-methionine = tryprostatin A + S-adenosyl-L-homocysteine + H(+). Its pathway is mycotoxin biosynthesis. Functionally, 6-hydroxytryprostatin B O-methyltransferase; part of the gene cluster that mediates the biosynthesis of fumitremorgins, indole alkaloids that carry not only intriguing chemical structures, but also interesting biological and pharmacological activities. The biosynthesis of fumitremorgin-type alkaloids begins by condensation of the two amino acids L-tryptophan and L-proline to brevianamide F, catalyzed by the non-ribosomal peptide synthetase ftmA. Brevianamide F is then prenylated by the prenyltransferase ftmPT1/ftmB in the presence of dimethylallyl diphosphate, resulting in the formation of tryprostatin B. The three cytochrome P450 monooxygenases, ftmP450-1/ftmC, ftmP450-2/ftmE and ftmP450-3/FtmG, are responsible for the conversion of tryprostatin B to 6-hydroxytryprostatin B, tryprostatin A to fumitremorgin C and fumitremorgin C to 12,13-dihydroxyfumitremorgin C, respectively. The putative methyltransferase ftmMT/ftmD is expected for the conversion of 6-hydroxytryprostatin B to tryprostatin A. FtmPT2/FtmH catalyzes the prenylation of 12,13-dihydroxyfumitre-morgin C in the presence of dimethylallyl diphosphate, resulting in the formation of fumitremorgin B. Fumitremorgin B is further converted to verruculogen by ftmOx1/ftmF via the insertion of an endoperoxide bond between the two prenyl moieties. In some fungal species, verruculogen is further converted to fumitremorgin A, but the enzymes involved in this step have not been identified yet. This chain is 6-hydroxytryprostatin B O-methyltransferase, found in Aspergillus fumigatus (strain ATCC MYA-4609 / CBS 101355 / FGSC A1100 / Af293) (Neosartorya fumigata).